Here is a 697-residue protein sequence, read N- to C-terminus: Glycine--tRNA ligase beta subunit (697 aa).

This sequence belongs to the class-II aminoacyl-tRNA synthetase family. As to quaternary structure, tetramer of two alpha and two beta subunits.

The protein resides in the cytoplasm. The catalysed reaction is tRNA(Gly) + glycine + ATP = glycyl-tRNA(Gly) + AMP + diphosphate. In Ralstonia nicotianae (strain ATCC BAA-1114 / GMI1000) (Ralstonia solanacearum), this protein is Glycine--tRNA ligase beta subunit.